Reading from the N-terminus, the 402-residue chain is Phosphoglycerate kinase (402 aa).

Residues 30 to 32, R46, 70 to 73, R126, and R159 contribute to the substrate site; these read DFN and HLGR. Residues K210, E332, and 358-361 each bind ATP; that span reads GGDT.

It belongs to the phosphoglycerate kinase family. As to quaternary structure, monomer.

It is found in the cytoplasm. It carries out the reaction (2R)-3-phosphoglycerate + ATP = (2R)-3-phospho-glyceroyl phosphate + ADP. The protein operates within carbohydrate degradation; glycolysis; pyruvate from D-glyceraldehyde 3-phosphate: step 2/5. This is Phosphoglycerate kinase from Helicobacter hepaticus (strain ATCC 51449 / 3B1).